A 419-amino-acid polypeptide reads, in one-letter code: Synaptic vesicle membrane protein VAT-1 homolog-like (419 aa).

Positions 1–25 (MAKEGVEKAEETEQMIEKEAGKEPA) are enriched in basic and acidic residues. 2 disordered regions span residues 1–36 (MAKEGVEKAEETEQMIEKEAGKEPAEGGGGDGSHRL) and 384–419 (PTPLMANDSTETSEAGEEEEDHEGDSENKERMPFIQ). Ser-392 carries the phosphoserine modification. Phosphothreonine occurs at positions 393 and 395. Residue Ser-396 is modified to Phosphoserine. Positions 397–407 (EAGEEEEDHEG) are enriched in acidic residues. Residues 408 to 419 (DSENKERMPFIQ) are compositionally biased toward basic and acidic residues.

The protein belongs to the zinc-containing alcohol dehydrogenase family. Quinone oxidoreductase subfamily. In terms of tissue distribution, detected in skin fibroblasts.

This Homo sapiens (Human) protein is Synaptic vesicle membrane protein VAT-1 homolog-like (VAT1L).